The primary structure comprises 380 residues: Cytochrome b (380 aa).

4 helical membrane passes run 33 to 53 (FGSLLGMCLMIQILTGLFLAM), 77 to 98 (WLIRYLHANGASMFFICLFIHV), 113 to 133 (WNIGIVLLLTTMATAFVGYVL), and 178 to 198 (FFAFHFILPFIITALVLVHLL). Residues histidine 83 and histidine 97 each coordinate heme b. The heme b site is built by histidine 182 and histidine 196. Residue histidine 201 coordinates a ubiquinone. 4 helical membrane passes run 226–246 (IKDLLGALILLMVLMILVLFF), 288–308 (LGGVLALILSILILATLPLLN), 320–340 (ITQALYWIFVANLLTXTWIGG), and 347–367 (FTLIGXIASXLXFXIIIIFMP).

This sequence belongs to the cytochrome b family. In terms of assembly, the cytochrome bc1 complex contains 11 subunits: 3 respiratory subunits (MT-CYB, CYC1 and UQCRFS1), 2 core proteins (UQCRC1 and UQCRC2) and 6 low-molecular weight proteins (UQCRH/QCR6, UQCRB/QCR7, UQCRQ/QCR8, UQCR10/QCR9, UQCR11/QCR10 and a cleavage product of UQCRFS1). This cytochrome bc1 complex then forms a dimer. Heme b serves as cofactor.

It localises to the mitochondrion inner membrane. Component of the ubiquinol-cytochrome c reductase complex (complex III or cytochrome b-c1 complex) that is part of the mitochondrial respiratory chain. The b-c1 complex mediates electron transfer from ubiquinol to cytochrome c. Contributes to the generation of a proton gradient across the mitochondrial membrane that is then used for ATP synthesis. The polypeptide is Cytochrome b (MT-CYB) (Rhipidomys wetzeli (Wetzel's climbing mouse)).